Reading from the N-terminus, the 212-residue chain is Adenylate kinase (212 aa).

10–15 provides a ligand contact to ATP; that stretch reads GAGKGT. Residues 30-59 form an NMP region; it reads STGDMFRAAIANQTEMGVLAKSYIDKGELV. AMP contacts are provided by residues T31, R36, 57–59, 86–89, and Q93; these read ELV and GYPR. The LID stretch occupies residues 127 to 159; that stretch reads GRIIHRETGETFHKVFNPPADYKEEDYYQREDD. Residues R128 and 137-138 each bind ATP; that span reads TF. Residues R156 and R167 each coordinate AMP. Q195 is an ATP binding site.

This sequence belongs to the adenylate kinase family. As to quaternary structure, monomer.

It localises to the cytoplasm. The catalysed reaction is AMP + ATP = 2 ADP. It participates in purine metabolism; AMP biosynthesis via salvage pathway; AMP from ADP: step 1/1. Its function is as follows. Catalyzes the reversible transfer of the terminal phosphate group between ATP and AMP. Plays an important role in cellular energy homeostasis and in adenine nucleotide metabolism. The sequence is that of Adenylate kinase from Streptococcus sanguinis (strain SK36).